A 401-amino-acid polypeptide reads, in one-letter code: Nicotinate phosphoribosyltransferase (401 aa).

Position 224 is a phosphohistidine; by autocatalysis (H224).

It belongs to the NAPRTase family. Transiently phosphorylated on a His residue during the reaction cycle. Phosphorylation strongly increases the affinity for substrates and increases the rate of nicotinate D-ribonucleotide production. Dephosphorylation regenerates the low-affinity form of the enzyme, leading to product release.

It carries out the reaction nicotinate + 5-phospho-alpha-D-ribose 1-diphosphate + ATP + H2O = nicotinate beta-D-ribonucleotide + ADP + phosphate + diphosphate. Its pathway is cofactor biosynthesis; NAD(+) biosynthesis; nicotinate D-ribonucleotide from nicotinate: step 1/1. In terms of biological role, catalyzes the synthesis of beta-nicotinate D-ribonucleotide from nicotinate and 5-phospho-D-ribose 1-phosphate at the expense of ATP. The protein is Nicotinate phosphoribosyltransferase of Pseudomonas putida (strain GB-1).